Consider the following 246-residue polypeptide: Small ribosomal subunit protein uS2 (246 aa).

Belongs to the universal ribosomal protein uS2 family.

The polypeptide is Small ribosomal subunit protein uS2 (Pseudomonas aeruginosa (strain LESB58)).